The following is a 478-amino-acid chain: Transposase for insertion sequence element IS231D (478 aa).

The protein belongs to the transposase 11 family.

Involved in the transposition of the insertion sequence. The chain is Transposase for insertion sequence element IS231D from Bacillus thuringiensis subsp. finitimus.